The chain runs to 472 residues: MAKTYDAGVKEYRETYWMPEYTPLDTDILACFKVTPQPGVPREEVAAAVAAESSTGTWTTVWTDLLTDLDHYKGRAYAIEDVPGDDTCFYAFIAYPIDLFEEGSVVNVMTSLVGNVFGFKALRALRLEDIRFPIAYVMTCNGPPQGIQVERDLLNKYGRPLLGCTIKPKLGLSAKNYGRACYEGLRGGLDFTKDDENVNSQPFMRWRHRFDFVMEAIQKAEAETGERKGHYLNVTAPTSDEMMKRAEYAKEIGAPIIMHDYITGGWSANTQLAQWCQDNGMLLHIHRAMHAVLDRNPHHGIHFRVLTKILRLSGGDHLHSGTVVGKLEGDREATLGWIDIMRDSFNKEDRSRGIFFDQDWGSMPGVLPVASGGIHVWHMPALVNIFGDDSVLQFGGGTLGHPWGNAAGAAANRVAVEACVEARNNGRELEKEGKEILTTAAAHSPELKAAMETWKEIKFEFDTVDKLDVSHK.

Residues N115 and T165 each coordinate substrate. K167 acts as the Proton acceptor in catalysis. K169 provides a ligand contact to substrate. 3 residues coordinate Mg(2+): K193, D195, and E196. K193 carries the post-translational modification N6-carboxylysine. The active-site Proton acceptor is the H286. Residues R287, H319, and S371 each coordinate substrate.

It belongs to the RuBisCO large chain family. Type I subfamily. Heterohexadecamer of 8 large chains and 8 small chains. Mg(2+) serves as cofactor.

The enzyme catalyses 2 (2R)-3-phosphoglycerate + 2 H(+) = D-ribulose 1,5-bisphosphate + CO2 + H2O. It carries out the reaction D-ribulose 1,5-bisphosphate + O2 = 2-phosphoglycolate + (2R)-3-phosphoglycerate + 2 H(+). Functionally, ruBisCO catalyzes two reactions: the carboxylation of D-ribulose 1,5-bisphosphate, the primary event in carbon dioxide fixation, as well as the oxidative fragmentation of the pentose substrate. Both reactions occur simultaneously and in competition at the same active site. In Solemya velum gill symbiont, this protein is Ribulose bisphosphate carboxylase large chain.